Here is a 485-residue protein sequence, read N- to C-terminus: MGCFSSKELQQSKRTILEKPLVDITKIYILGEELGRGNFGLTRKCVEKSTGKTFACKTILKTKLKDEECEEDVKREIRIMKQLSGEPNIVEFKNAYEDKDSVHIVMEYCGGGELYDKILALYDVGKSYSEKEAAGIIRSIVNVVKNCHYMGVMHRDLKPENFLLTSNDDNATVKVIDFGCSVFIEEGKVYQDLAGSDYYIAPEVLQGNYGKEADIWSAGIILYILLCGKSPFVKEPEGQMFNEIKSLEIDYSEEPWPLRDSRAIHLVKRMLDRNPKERISAAEVLGHPWMKEGEASDKPIDGVVLSRLKRFRDANKFKKVVLKFIAANLSEEEIKGLKTLFTNIDTDKSGNITLEELKTGLTRLGSNLSKTEVEQLMEAADMDGNGTIDIDEFISATMHRYKLDRDEHVYKAFQHFDKDNDGHITKEELEMAMKEDGAGDEGSIKQIIADADTDNDGKINFEEFRTMMRTESSLQPEGELLPIIN.

Glycine 2 is lipidated: N-myristoyl glycine. Residues 28 to 290 (YILGEELGRG…AAEVLGHPWM (263 aa)) enclose the Protein kinase domain. Residues 34–42 (LGRGNFGLT) and lysine 57 each bind ATP. Aspartate 156 serves as the catalytic Proton acceptor. The residue at position 196 (serine 196) is a Phosphoserine. Residues 295-325 (ASDKPIDGVVLSRLKRFRDANKFKKVVLKFI) are autoinhibitory domain. 4 EF-hand domains span residues 332–367 (EEIK…LGSN), 368–403 (LSKT…RYKL), 404–439 (DRDE…DGAG), and 444–474 (IKQI…ESSL). Residues aspartate 345, aspartate 347, serine 349, asparagine 351, glutamate 356, aspartate 381, aspartate 383, asparagine 385, threonine 387, glutamate 392, aspartate 417, aspartate 419, aspartate 421, histidine 423, glutamate 428, aspartate 452, aspartate 454, aspartate 456, lysine 458, and glutamate 463 each contribute to the Ca(2+) site.

The protein belongs to the protein kinase superfamily. Ser/Thr protein kinase family. CDPK subfamily.

It localises to the membrane. It catalyses the reaction L-seryl-[protein] + ATP = O-phospho-L-seryl-[protein] + ADP + H(+). The catalysed reaction is L-threonyl-[protein] + ATP = O-phospho-L-threonyl-[protein] + ADP + H(+). Its activity is regulated as follows. Activated by calcium. Autophosphorylation may play an important role in the regulation of the kinase activity. May play a role in signal transduction pathways that involve calcium as a second messenger. This chain is Calcium-dependent protein kinase 27 (CPK27), found in Arabidopsis thaliana (Mouse-ear cress).